Reading from the N-terminus, the 179-residue chain is Large ribosomal subunit protein uL6 (179 aa).

Belongs to the universal ribosomal protein uL6 family. As to quaternary structure, part of the 50S ribosomal subunit.

This protein binds to the 23S rRNA, and is important in its secondary structure. It is located near the subunit interface in the base of the L7/L12 stalk, and near the tRNA binding site of the peptidyltransferase center. The sequence is that of Large ribosomal subunit protein uL6 from Synechococcus sp. (strain RCC307).